Here is a 339-residue protein sequence, read N- to C-terminus: DnaJ homolog subfamily C member 22 (339 aa).

The TM2 domain maps to 4 to 50; sequence GLLMTYVLWALGGPVGLHHLYLGRDSHALLWMLTLGGGGLGWLWEFW. Helical transmembrane passes span 5–25, 30–50, 81–101, 105–125, 135–155, 185–205, and 218–238; these read LLMT…HLYL, HALL…WEFW, FASQ…SLSS, FYIV…AAVG, LGAA…ILPI, VGLA…YNTA, and FLSW…VLLL. The region spanning 277–339 is the J domain; the sequence is LAHQVLGVPE…LSQPKKPRAS (63 aa).

It is found in the membrane. Its function is as follows. May function as a co-chaperone. The sequence is that of DnaJ homolog subfamily C member 22 (Dnajc22) from Mus musculus (Mouse).